Here is a 121-residue protein sequence, read N- to C-terminus: Large ribosomal subunit protein uL14 (121 aa).

The protein belongs to the universal ribosomal protein uL14 family. Part of the 50S ribosomal subunit. Forms a cluster with proteins L3 and L19. In the 70S ribosome, L14 and L19 interact and together make contacts with the 16S rRNA in bridges B5 and B8.

Binds to 23S rRNA. Forms part of two intersubunit bridges in the 70S ribosome. The sequence is that of Large ribosomal subunit protein uL14 from Legionella pneumophila (strain Paris).